The primary structure comprises 79 residues: Small integral membrane protein 40 (79 aa).

The chain crosses the membrane as a helical span at residues 35–55; that stretch reads FFIFLALFLTLLMLEAAYKLL.

The protein resides in the membrane. This chain is Small integral membrane protein 40, found in Homo sapiens (Human).